Consider the following 695-residue polypeptide: Elongation factor G (695 aa).

The tr-type G domain occupies 10–285 (DKTRNIGIMA…GVVDYLPSPL (276 aa)). Residues 19–26 (AHIDAGKT), 83–87 (DTPGH), and 137–140 (NKMD) each bind GTP.

The protein belongs to the TRAFAC class translation factor GTPase superfamily. Classic translation factor GTPase family. EF-G/EF-2 subfamily.

The protein localises to the cytoplasm. Catalyzes the GTP-dependent ribosomal translocation step during translation elongation. During this step, the ribosome changes from the pre-translocational (PRE) to the post-translocational (POST) state as the newly formed A-site-bound peptidyl-tRNA and P-site-bound deacylated tRNA move to the P and E sites, respectively. Catalyzes the coordinated movement of the two tRNA molecules, the mRNA and conformational changes in the ribosome. The sequence is that of Elongation factor G from Latilactobacillus sakei subsp. sakei (strain 23K) (Lactobacillus sakei subsp. sakei).